Reading from the N-terminus, the 341-residue chain is RNA 3'-terminal phosphate cyclase (341 aa).

Residues Gln-102 and 283–287 (HLADQ) contribute to the ATP site. His-308 (tele-AMP-histidine intermediate) is an active-site residue.

This sequence belongs to the RNA 3'-terminal cyclase family. Type 1 subfamily.

It localises to the cytoplasm. It carries out the reaction a 3'-end 3'-phospho-ribonucleotide-RNA + ATP = a 3'-end 2',3'-cyclophospho-ribonucleotide-RNA + AMP + diphosphate. Catalyzes the conversion of 3'-phosphate to a 2',3'-cyclic phosphodiester at the end of RNA. The mechanism of action of the enzyme occurs in 3 steps: (A) adenylation of the enzyme by ATP; (B) transfer of adenylate to an RNA-N3'P to produce RNA-N3'PP5'A; (C) and attack of the adjacent 2'-hydroxyl on the 3'-phosphorus in the diester linkage to produce the cyclic end product. The biological role of this enzyme is unknown but it is likely to function in some aspects of cellular RNA processing. The chain is RNA 3'-terminal phosphate cyclase from Ectopseudomonas mendocina (strain ymp) (Pseudomonas mendocina).